Consider the following 373-residue polypeptide: Leucine aminopeptidase 1 (373 aa).

The first 18 residues, 1–18, serve as a signal peptide directing secretion; sequence MKFISVLALGATATSVLG. Residues histidine 176 and aspartate 195 each coordinate Zn(2+). N-linked (GlcNAc...) asparagine glycosylation occurs at asparagine 196. Residues glutamate 234 and aspartate 261 each coordinate Zn(2+). Asparagine 286 carries N-linked (GlcNAc...) asparagine glycosylation. A disulfide bridge connects residues cysteine 310 and cysteine 314. Histidine 343 provides a ligand contact to Zn(2+).

Belongs to the peptidase M28 family. M28E subfamily. As to quaternary structure, monomer. The cofactor is Zn(2+).

Its subcellular location is the secreted. Functionally, extracellular aminopeptidase which contributes to pathogenicity. The polypeptide is Leucine aminopeptidase 1 (LAP1) (Arthroderma otae (strain ATCC MYA-4605 / CBS 113480) (Microsporum canis)).